The primary structure comprises 876 residues: MKNLKASEIRQNFIDYFVEKGHMVEPSAPLVPIDDDSLLWINSGVATLKKYFDGRETPRKPRIVNSQKAIRTNDIENVGFTARHHTFFEMLGNFSIGDYFKQEAIEFAWEFLTSEKWMAMEPKLLYVTIHPEDKEAYRIWNEDIGLEESRIIRIEGNFWDIGEGPSGPNTEIFYDRGEDFGQDDPAEEMYPGGENERFLEVWNLVFSEFNHNKDHTYTPLPNKNIDTGMGLERMASLAQNVRTNYETDLFMPIIHEVEKVSGKTYLENDNYDVAFKVIADHIRTIAFAIADGALPANEGRGYVLRRLLRRAVRFSQSLDINEPFMYRLVDIVADIMEPYYPNVKEKADFIKRVIKSEEERFHETLEEGLAILNNLVAQAKTSTHEISGKDAFKLYDTYGFPVELTEEIATQENLSIDMQTFEEEMQQQRDRARQARQNSQSMQVQSEVLKKITTDSTFVGYDVMDKASVITDIIQNGELVESAEAGETIYFILRETPFYAVSGGQVADQGTISNENFEIAVTEVTKAPNGQNLHKGEIQFGTVKKNAEVSASVNHKERRSIKKNHSATHLLHAALKEVLGDHVNQAGSLVEADRLRFDFSHFGPMTQEEIDTVERRVNEEIWNSIEVDIQEMPISEAKQLGAMALFGEKYGEIVRVVNMAPFSIELCGGIHVNNTAEIGLFKIVSESGTGAGVRRIEALTGKSAFLYLETIQSQFNAVKSQVKVKSDDQVLEKIVHMQDEEKELTKQLEQKNKEVTSLKMGDITNQVEEINGLKVLATEVDVPNAKAIRETMDDFKSKLQDTVIVLISNIDGKVSLVATVPKALTDKVKAGDIIKNMAPVVGGKGGGRPDMAQGGGTEPKNITESLRFIKDYIKSL.

Residues His565, His569, Cys667, and His671 each contribute to the Zn(2+) site.

This sequence belongs to the class-II aminoacyl-tRNA synthetase family. The cofactor is Zn(2+).

The protein resides in the cytoplasm. The catalysed reaction is tRNA(Ala) + L-alanine + ATP = L-alanyl-tRNA(Ala) + AMP + diphosphate. Catalyzes the attachment of alanine to tRNA(Ala) in a two-step reaction: alanine is first activated by ATP to form Ala-AMP and then transferred to the acceptor end of tRNA(Ala). Also edits incorrectly charged Ser-tRNA(Ala) and Gly-tRNA(Ala) via its editing domain. The chain is Alanine--tRNA ligase from Staphylococcus saprophyticus subsp. saprophyticus (strain ATCC 15305 / DSM 20229 / NCIMB 8711 / NCTC 7292 / S-41).